The primary structure comprises 602 residues: uncharacterized protein (602 aa).

One can recognise a Helicase ATP-binding domain in the interval 51–210; the sequence is QYLGTQPRDF…PFVSYQPDAD (160 aa). Over residues 430 to 439 the composition is skewed to basic and acidic residues; the sequence is PHRESAHDPL. 2 disordered regions span residues 430–452 and 518–538; these read PHRESAHDPLDGDPATRTQTERG and RAQLQKGATQPATSGASASVH. Over residues 523–534 the composition is skewed to polar residues; sequence KGATQPATSGAS.

This sequence to M.leprae ML1624.

This is an uncharacterized protein from Mycobacterium tuberculosis (strain ATCC 25618 / H37Rv).